The sequence spans 316 residues: Bifunctional peptidase and (3S)-lysyl hydroxylase JMJD7 (316 aa).

The JmjC domain occupies 128–307 (VQKQCSNLPS…LKYSYFQLLD (180 aa)). H178, D180, and H277 together coordinate Fe cation.

Homodimer; disulfide-linked. Interacts with DRG1 and DRG2. The cofactor is Fe(2+).

The protein localises to the nucleus. The protein resides in the cytoplasm. It catalyses the reaction L-lysyl-[protein] + 2-oxoglutarate + O2 = (3S)-3-hydroxy-L-lysyl-[protein] + succinate + CO2. Functionally, bifunctional enzyme that acts both as an endopeptidase and 2-oxoglutarate-dependent monooxygenase. Endopeptidase that cleaves histones N-terminal tails at the carboxyl side of methylated arginine or lysine residues, to generate 'tailless nucleosomes', which may trigger transcription elongation. Preferentially recognizes and cleaves monomethylated and dimethylated arginine residues of histones H2, H3 and H4. After initial cleavage, continues to digest histones tails via its aminopeptidase activity. Additionally, may play a role in protein biosynthesis by modifying the translation machinery. Acts as a Fe(2+) and 2-oxoglutarate-dependent monooxygenase, catalyzing (S)-stereospecific hydroxylation at C-3 of 'Lys-22' of DRG1 and 'Lys-21' of DRG2 translation factors (TRAFAC), promoting their interaction with ribonucleic acids (RNA). The protein is Bifunctional peptidase and (3S)-lysyl hydroxylase JMJD7 of Homo sapiens (Human).